The sequence spans 212 residues: Orotate phosphoribosyltransferase (212 aa).

Residue Lys26 coordinates 5-phospho-alpha-D-ribose 1-diphosphate. An orotate-binding site is contributed by 34–35 (FF). Residues 72–73 (YK), Arg98, Lys99, Lys102, His104, and 123–131 (DDVITAGTA) each bind 5-phospho-alpha-D-ribose 1-diphosphate. Residues Thr127 and Arg155 each coordinate orotate.

This sequence belongs to the purine/pyrimidine phosphoribosyltransferase family. PyrE subfamily. Homodimer. Mg(2+) is required as a cofactor.

It catalyses the reaction orotidine 5'-phosphate + diphosphate = orotate + 5-phospho-alpha-D-ribose 1-diphosphate. The protein operates within pyrimidine metabolism; UMP biosynthesis via de novo pathway; UMP from orotate: step 1/2. Functionally, catalyzes the transfer of a ribosyl phosphate group from 5-phosphoribose 1-diphosphate to orotate, leading to the formation of orotidine monophosphate (OMP). This is Orotate phosphoribosyltransferase from Marinobacter nauticus (strain ATCC 700491 / DSM 11845 / VT8) (Marinobacter aquaeolei).